Reading from the N-terminus, the 789-residue chain is Potassium transporter 4 (789 aa).

The Cytoplasmic segment spans residues M1–S32. Residue S9 is modified to Phosphoserine. A helical transmembrane segment spans residues F33 to I53. Residues G54–A68 are Extracellular-facing. The chain crosses the membrane as a helical span at residues F69 to L89. Residues S90–T154 are Cytoplasmic-facing. A helical membrane pass occupies residues A155–P175. Residues A176–D195 are Extracellular-facing. Residues G196 to G216 traverse the membrane as a helical segment. At T217–R219 the chain is on the cytoplasmic side. Residues V220–L240 traverse the membrane as a helical segment. Topologically, residues Y241–G270 are extracellular. Residues W271–L291 traverse the membrane as a helical segment. The Cytoplasmic segment spans residues G292 to R300. The chain crosses the membrane as a helical span at residues V301–F321. Topologically, residues L322–P340 are extracellular. Residues V341–I361 form a helical membrane-spanning segment. Over T362–Q392 the chain is Cytoplasmic. A helical membrane pass occupies residues I393–F413. The Extracellular portion of the chain corresponds to R414–G424. Residues I425–V445 traverse the membrane as a helical segment. Over W446–C450 the chain is Cytoplasmic. The helical transmembrane segment at F451–A471 threads the bilayer. Residues L472–G478 lie on the Extracellular side of the membrane. A helical transmembrane segment spans residues G479–G499. Residues T500–V789 are Cytoplasmic-facing.

Belongs to the HAK/KUP transporter (TC 2.A.72.3) family. In terms of tissue distribution, detected at very low levels in roots, stems, leaves and flowers of mature plants and strongly expressed in the roots of potassium-starved plants.

The protein localises to the cell membrane. High-affinity potassium transporter. The sequence is that of Potassium transporter 4 (POT4) from Arabidopsis thaliana (Mouse-ear cress).